The following is a 271-amino-acid chain: MASENMTPQDYIGHHLNNLQLDLRTFSLVDPHNHTATFWTLNIDSMFFSVVLGLLFLAMFRSVAKKATSGVPGKFQTFIEMIIGFVHGSVKDMYHGKSKVIAPLALTVFVWVFLMNLMDLLPIDLLPYIGEHIFGLPALRVVPSADVNITLSMALGVFILIIFYSIKMKGVGGFVKELTMQPFNHWAFIPVNLILEGVSLLSKPVSLGLRLFGNMYAGELIFILIAGLLPWWSQWVLNVPWAIFHILIITLQAFIFMVLTIVYLSMASEEH.

The next 5 helical transmembrane spans lie at 38 to 58 (FWTL…LFLA), 100 to 120 (VIAP…LMDL), 146 to 166 (DVNI…FYSI), 211 to 231 (LFGN…LLPW), and 242 to 262 (AIFH…LTIV).

It belongs to the ATPase A chain family. In terms of assembly, F-type ATPases have 2 components, CF(1) - the catalytic core - and CF(0) - the membrane proton channel. CF(1) has five subunits: alpha(3), beta(3), gamma(1), delta(1), epsilon(1). CF(0) has three main subunits: a(1), b(2) and c(9-12). The alpha and beta chains form an alternating ring which encloses part of the gamma chain. CF(1) is attached to CF(0) by a central stalk formed by the gamma and epsilon chains, while a peripheral stalk is formed by the delta and b chains.

It is found in the cell inner membrane. Its function is as follows. Key component of the proton channel; it plays a direct role in the translocation of protons across the membrane. The chain is ATP synthase subunit a from Klebsiella pneumoniae (strain 342).